The sequence spans 302 residues: MVSQQQIEAIGGVLNNKERPLKERFRALFTLKNIGGGAAIEAISKAFDDDSALLKHELAYCLGQMQDAQALDILTKVLKDTTQEPMVRHEAAEAMGAIGHPDVLPILEEYKQDPVVEVAETCAIALDRVRWLQSGQKVDDSNPYASVDPSPPTAGDKSVTELKAIYLDAQQSLFDRYRAMFSLRNLRTEESVLAIAEGLKDSSALFRHEVAFVLGQLQEPCSIPFLQENLEDRLENEMVRHECAEALGAIATEDCIQILNRYAEDDKRVVKESCVIALDMCEYENSPEFQYADGLAKLDATK.

HEAT-like PBS-type repeat units follow at residues 23–49 (ERFR…AFDD), 54–80 (LKHE…VLKD), 87–113 (VRHE…YKQD), 175–201 (DRYR…GLKD), 206–232 (FRHE…NLED), and 239–265 (VRHE…YAED). Fe cation is bound by residues H56, E57, H89, and E90. The Fe cation site is built by H208, E209, H241, and E242.

Belongs to the deoxyhypusine hydroxylase family. Fe(2+) serves as cofactor.

The protein localises to the endoplasmic reticulum membrane. It catalyses the reaction [eIF5A protein]-deoxyhypusine + AH2 + O2 = [eIF5A protein]-hypusine + A + H2O. It functions in the pathway protein modification; eIF5A hypusination. In terms of biological role, catalyzes the hydroxylation of the N(6)-(4-aminobutyl)-L-lysine intermediate to form hypusine, an essential post-translational modification only found in mature eIF-5A factor. Essential for organismal viability and plays a role in a wide number of important processes such as cell growth and proliferation, and regulates induction of autophagy and protein synthesis. Has a role in eIF-5A-mediated translational control. This is Deoxyhypusine hydroxylase from Drosophila melanogaster (Fruit fly).